Here is a 422-residue protein sequence, read N- to C-terminus: MKKSIALVLSIVLLAALFAVPASAGEQNTIRVIVSVDKAKFNPHEVLGIGGHIVYQFKLIPAVVVDVPANAVGKLKKMPGVEKVEFDHQAVLLGKPSWLGGGSTQPAQTIPWGIERVKAPSVWSITDGSVSVIQVAVLDTGVDYDHPDLAANIAWCVSTLRGKVSTKLRDCADQNGHGTHVIGTIAALNNDIGVVGVAPGVQIYSVRVLDARGSGSYSDIAIGIEQAILGPDGVADKDGDGIIAGDPDDDAAEVISMSLGGPADDSYLYDMIIQAYNAGIVIVAASGNEGAPSPSYPAAYPEVIAVGAIDSNDNIASFSNRQPEVSAPGVDILSTYPDDSYETLMGTSMATPHVSGVVALIQAAYYQKYGKILPVGTFDDISKNTVRGILHITADDLGPTGWDADYGYGVVRAALAVQAALG.

The first 24 residues, 1 to 24, serve as a signal peptide directing secretion; the sequence is MKKSIALVLSIVLLAALFAVPASA. Positions 25–106 are excised as a propeptide; the sequence is GEQNTIRVIV…SWLGGGSTQP (82 aa). The Peptidase S8 domain maps to 111-417; that stretch reads PWGIERVKAP…YGVVRAALAV (307 aa). Catalysis depends on charge relay system residues aspartate 139, histidine 177, and serine 348.

This sequence belongs to the peptidase S8 family. Monomer. Ca(2+) is required as a cofactor.

The protein resides in the secreted. In terms of biological role, has a broad substrate specificity with a slight preference to large hydrophobic amino acid residues at the P1 position. The polypeptide is Tk-subtilisin (Thermococcus kodakarensis (strain ATCC BAA-918 / JCM 12380 / KOD1) (Pyrococcus kodakaraensis (strain KOD1))).